The chain runs to 204 residues: Dephospho-CoA kinase (204 aa).

Residues 3–204 form the DPCK domain; that stretch reads VIGLTGGIGS…DRLDLAYRAH (202 aa). An ATP-binding site is contributed by 11–16; sequence GSGKSY.

It belongs to the CoaE family.

The protein localises to the cytoplasm. The catalysed reaction is 3'-dephospho-CoA + ATP = ADP + CoA + H(+). The protein operates within cofactor biosynthesis; coenzyme A biosynthesis; CoA from (R)-pantothenate: step 5/5. In terms of biological role, catalyzes the phosphorylation of the 3'-hydroxyl group of dephosphocoenzyme A to form coenzyme A. In Ralstonia nicotianae (strain ATCC BAA-1114 / GMI1000) (Ralstonia solanacearum), this protein is Dephospho-CoA kinase.